The chain runs to 495 residues: Cytochrome P450 monooxygenase 113 (495 aa).

Residues 2–22 (FLQIAACFTVIGLLYGLVSNL) traverse the membrane as a helical segment. Cysteine 428 contributes to the heme binding site.

Belongs to the cytochrome P450 family. Heme serves as cofactor.

Its subcellular location is the membrane. It participates in secondary metabolite biosynthesis. In terms of biological role, cytochrome P450 monooxygenase that is able to use 4-ethoxybenzoic acid as a substrate for oxidation. This chain is Cytochrome P450 monooxygenase 113, found in Postia placenta (strain ATCC 44394 / Madison 698-R) (Brown rot fungus).